The primary structure comprises 349 residues: MSPLWVRRLCIRVVDSLYGSFLYLPLAILFLKRSVTGFGTGEWDESQIPKLDGKVAVVTGGNAGIGYYTVKHLASRGAKVYLGARSESRAKAAIKRLLEENPLIPQENVVWLRLDLANQSQVVDAAVELQSKEQRLDILVNNAGIDPYDYIRTADGFEMTMAVKYTNPAAAAQEESDVRVITVSSSGEAYSSPTNQFTSPKDLDDPCASPGWENSCLGQAMRYGTTKLANVLFASELQRRMDEEDANIISLSLNPGTVRTDGAANVMPFMVRPLVRFLFTAPERGADTSLFAATAEEIKENSERWKGRYLDGPGRIKVPSLRARDAVAGRNLWNITEAAVRGTGALDRL.

A helical transmembrane segment spans residues 9 to 31; it reads LCIRVVDSLYGSFLYLPLAILFL. NADP(+) contacts are provided by isoleucine 65, arginine 89, and aspartate 115. N-linked (GlcNAc...) asparagine glycosylation occurs at asparagine 118. 2 residues coordinate NADP(+): asparagine 142 and lysine 164. Residues serine 191 and serine 192 each act as proton donor in the active site. Residues tyrosine 223 and lysine 227 each contribute to the NADP(+) site. Residue tyrosine 223 is the Proton acceptor of the active site. Lysine 227 serves as the catalytic Lowers pKa of active site Tyr. Asparagine 334 carries an N-linked (GlcNAc...) asparagine glycan.

It belongs to the short-chain dehydrogenases/reductases (SDR) family.

It localises to the membrane. It participates in secondary metabolite biosynthesis; terpenoid biosynthesis. Functionally, short chain dehydrogenase/reductase; part of the gene cluster that mediates the biosynthesis of diterpenoid pyrones. The first step of the pathway is the synthesis of the alpha-pyrone moiety by the polyketide synthase dpfgA via condensation of one acetyl-CoA starter unit with 3 malonyl-CoA units and 2 methylations. The alpha-pyrone is then combined with geranylgeranyl pyrophosphate (GGPP) formed by the GGPP synthase dpfgD through the action of the prenyltransferase dpfgC to yield a linear alpha-pyrone diterpenoid. Subsequent steps in the diterpenoid pyrone biosynthetic pathway involve the decalin core formation, which is initiated by the epoxidation of the C10-C11 olefin by the FAD-dependent oxidoreductase dpfgE, and is followed by a cyclization cascade catalyzed by the terpene cyclase dpfgB. The short chain dehydrogenase/reductase dpfgG then oxidizes the 8S hydroxy group to a ketone and the short chain dehydrogenase/reductase dpfgH reduces the ketone to the 8R hydroxy group to yield higginsianin B. Higginsianin B is further methylated by the methyltransferase dpfgI to produce the intermediate named FDDP B. The cytochrome P450 monooxygenase dfgpJ then catalyzes a three-step oxidation at C-27 to generate a carboxylic acid as well as C-26 hydroxylation. Finally, methyltransferase dpfgK methylates the carboxylic acid generated by dpfgJ, yielding the final diterpenoid pyrones from the pathway which were named FDDP D and FDDP E. This chain is Short chain dehydrogenase/reductase dpfgH, found in Gibberella zeae (strain ATCC MYA-4620 / CBS 123657 / FGSC 9075 / NRRL 31084 / PH-1) (Wheat head blight fungus).